The primary structure comprises 158 residues: Ribonuclease H (158 aa).

Residues 9–155 (AFKPVELYTD…CDKLAVAAYQ (147 aa)) form the RNase H type-1 domain. Residues Asp-18, Glu-58, Asp-80, and Asp-147 each coordinate Mg(2+).

This sequence belongs to the RNase H family. Monomer. Requires Mg(2+) as cofactor.

It localises to the cytoplasm. It catalyses the reaction Endonucleolytic cleavage to 5'-phosphomonoester.. In terms of biological role, endonuclease that specifically degrades the RNA of RNA-DNA hybrids. The polypeptide is Ribonuclease H (Rhodopirellula baltica (strain DSM 10527 / NCIMB 13988 / SH1)).